A 219-amino-acid chain; its full sequence is 2-hydroxy-3-keto-5-methylthiopentenyl-1-phosphate phosphatase (219 aa).

It belongs to the HAD-like hydrolase superfamily. MtnX family.

It carries out the reaction 2-hydroxy-5-methylsulfanyl-3-oxopent-1-enyl phosphate + H2O = 1,2-dihydroxy-5-(methylsulfanyl)pent-1-en-3-one + phosphate. The protein operates within amino-acid biosynthesis; L-methionine biosynthesis via salvage pathway; L-methionine from S-methyl-5-thio-alpha-D-ribose 1-phosphate: step 4/6. Its function is as follows. Dephosphorylates 2-hydroxy-3-keto-5-methylthiopentenyl-1-phosphate (HK-MTPenyl-1-P) yielding 1,2-dihydroxy-3-keto-5-methylthiopentene (DHK-MTPene). This chain is 2-hydroxy-3-keto-5-methylthiopentenyl-1-phosphate phosphatase, found in Bacillus thuringiensis (strain Al Hakam).